A 346-amino-acid chain; its full sequence is Melanoma-associated antigen B3 (346 aa).

The segment at Met-1–Lys-35 is disordered. Residues Thr-18–Thr-33 are compositionally biased toward polar residues. Residues Leu-111 to Ala-310 form the MAGE domain.

In terms of tissue distribution, expressed in testis.

The protein is Melanoma-associated antigen B3 (MAGEB3) of Homo sapiens (Human).